Reading from the N-terminus, the 365-residue chain is Adenosine deaminase (365 aa).

Positions 19 and 21 each coordinate Zn(2+). Residues histidine 21, aspartate 23, and glycine 181 each coordinate substrate. Residue histidine 208 participates in Zn(2+) binding. The active-site Proton donor is the glutamate 211. Aspartate 300 provides a ligand contact to Zn(2+).

The protein belongs to the metallo-dependent hydrolases superfamily. Adenosine and AMP deaminases family. Adenosine deaminase subfamily. Zn(2+) is required as a cofactor.

It catalyses the reaction adenosine + H2O + H(+) = inosine + NH4(+). The catalysed reaction is 2'-deoxyadenosine + H2O + H(+) = 2'-deoxyinosine + NH4(+). Catalyzes the hydrolytic deamination of adenosine and 2-deoxyadenosine. The sequence is that of Adenosine deaminase from Mycobacterium tuberculosis (strain ATCC 25177 / H37Ra).